The following is a 229-amino-acid chain: Potassium/proton antiporter CemA (229 aa).

The next 3 membrane-spanning stretches (helical) occupy residues 7–27, 107–127, and 189–209; these read FTPL…SFSV, ILHF…SILG, and IISG…KYWI.

It belongs to the CemA family.

The protein resides in the plastid. It is found in the chloroplast inner membrane. The catalysed reaction is K(+)(in) + H(+)(out) = K(+)(out) + H(+)(in). Its function is as follows. Contributes to K(+)/H(+) antiport activity by supporting proton efflux to control proton extrusion and homeostasis in chloroplasts in a light-dependent manner to modulate photosynthesis. Prevents excessive induction of non-photochemical quenching (NPQ) under continuous-light conditions. Indirectly promotes efficient inorganic carbon uptake into chloroplasts. The protein is Potassium/proton antiporter CemA of Nicotiana tomentosiformis (Tobacco).